The following is a 310-amino-acid chain: MKVLWAALVVTLLAGCQADVEPEPEVQLGNEWAKWQAGQPWEQALGRFWNYLRWVQTLSDQVQEELLSTQATQELTALMEETMKEVKTYKAQLEQQLGPTAQETQARVSKELQAAQARLGADMEDVRNRLVQYRSELQAMMGQSTEELRGRLNSHLRKLRKRLLRDAEDLQKRLAVYQAGIREGAERSVNTLRERLRPLVEQAATVRSLISKPLQERAEAWGQRLRGRLEKVGTQAGDRLDEVREQVQEVRAKVEEQANQMRLQAEAFHARLKSWFEPLVQDMQQKWAELVEKVQLAVGTSPTSESSEKQ.

The signal sequence occupies residues 1–18 (MKVLWAALVVTLLAGCQA). Repeat copies occupy residues 77–98 (ALMEETMKEVKTYKAQLEQQLG), 99–120 (PTAQETQARVSKELQAAQARLG), 121–142 (ADMEDVRNRLVQYRSELQAMMG), and 143–164 (QSTEELRGRLNSHLRKLRKRLL). The interval 77–248 (ALMEETMKEV…RLDEVREQVQ (172 aa)) is 8 X 22 AA approximate tandem repeats. Met-140 is modified (methionine sulfoxide). Ser-144 bears the Phosphoserine mark. Residues 155-165 (HLRKLRKRLLR) form an LDL and other lipoprotein receptors binding region. 159 to 162 (LRKR) is a binding site for heparin. Positions 165-186 (RDAEDLQKRLAVYQAGIREGAE) form a repeat. A run of 3 repeats spans residues 187 to 204 (RSVNTLRERLRPLVEQAA), 205 to 226 (TVRSLISKPLQERAEAWGQRLR), and 227 to 248 (GRLEKVGTQAGDRLDEVREQVQ). Residues 203-283 (AATVRSLISK…SWFEPLVQDM (81 aa)) are lipid-binding and lipoprotein association. 222–229 (GQRLRGRL) is a binding site for heparin. Residues 259-310 (NQMRLQAEAFHARLKSWFEPLVQDMQQKWAELVEKVQLAVGTSPTSESSEKQ) are homooligomerization. The tract at residues 271-283 (RLKSWFEPLVQDM) is specificity for association with VLDL.

The protein belongs to the apolipoprotein A1/A4/E family. In terms of assembly, homotetramer. May interact with ABCA1; functionally associated with ABCA1 in the biogenesis of HDLs. May interact with APP/A4 amyloid-beta peptide; the interaction is extremely stable in vitro but its physiological significance is unclear. May interact with MAPT. May interact with MAP2. In the cerebrospinal fluid, interacts with secreted SORL1. Interacts with PMEL; this allows the loading of PMEL luminal fragment on ILVs to induce fibril nucleation. APOE exists as multiple glycosylated and sialylated glycoforms within cells and in plasma. The extent of glycosylation and sialylation are tissue and context specific. In terms of processing, glycated in plasma VLDL. Post-translationally, phosphorylated by FAM20C in the extracellular medium.

The protein resides in the secreted. It is found in the extracellular space. It localises to the extracellular matrix. Its subcellular location is the extracellular vesicle. The protein localises to the endosome. The protein resides in the multivesicular body. APOE is an apolipoprotein, a protein associating with lipid particles, that mainly functions in lipoprotein-mediated lipid transport between organs via the plasma and interstitial fluids. APOE is a core component of plasma lipoproteins and is involved in their production, conversion and clearance. Apolipoproteins are amphipathic molecules that interact both with lipids of the lipoprotein particle core and the aqueous environment of the plasma. As such, APOE associates with chylomicrons, chylomicron remnants, very low density lipoproteins (VLDL) and intermediate density lipoproteins (IDL) but shows a preferential binding to high-density lipoproteins (HDL). It also binds a wide range of cellular receptors including the LDL receptor/LDLR, the LDL receptor-related proteins LRP1, LRP2 and LRP8 and the very low-density lipoprotein receptor/VLDLR that mediate the cellular uptake of the APOE-containing lipoprotein particles. Finally, APOE also has a heparin-binding activity and binds heparan-sulfate proteoglycans on the surface of cells, a property that supports the capture and the receptor-mediated uptake of APOE-containing lipoproteins by cells. A main function of APOE is to mediate lipoprotein clearance through the uptake of chylomicrons, VLDLs, and HDLs by hepatocytes. APOE is also involved in the biosynthesis by the liver of VLDLs as well as their uptake by peripheral tissues ensuring the delivery of triglycerides and energy storage in muscle, heart and adipose tissues. By participating in the lipoprotein-mediated distribution of lipids among tissues, APOE plays a critical role in plasma and tissues lipid homeostasis. APOE is also involved in two steps of reverse cholesterol transport, the HDLs-mediated transport of cholesterol from peripheral tissues to the liver, and thereby plays an important role in cholesterol homeostasis. First, it is functionally associated with ABCA1 in the biogenesis of HDLs in tissues. Second, it is enriched in circulating HDLs and mediates their uptake by hepatocytes. APOE also plays an important role in lipid transport in the central nervous system, regulating neuron survival and sprouting. The protein is Apolipoprotein E (APOE) of Tapirus terrestris (Lowland tapir).